Consider the following 581-residue polypeptide: Proteasome-associated ATPase (581 aa).

The tract at residues 1–28 (MTSSDLTQRKGLTMSDSTPDTPRSTPED) is disordered. Polar residues predominate over residues 14-24 (MSDSTPDTPRS). Residues 27–66 (EDAARRLAVLSAQNERLAQVLGEARGKIVELQQQIEEFAK) are a coiled coil. 248 to 253 (GCGKTL) lines the ATP pocket. The tract at residues 561–581 (GSGRSAAGRTIETATSTGQYL) is disordered. Over residues 572 to 581 (ETATSTGQYL) the composition is skewed to polar residues. The interval 580-581 (YL) is docks into pockets in the proteasome alpha-ring.

This sequence belongs to the AAA ATPase family. As to quaternary structure, homohexamer. Assembles into a hexameric ring structure that caps the 20S proteasome core. Strongly interacts with the prokaryotic ubiquitin-like protein Pup through a hydrophobic interface; the interacting region of ARC lies in its N-terminal coiled-coil domain. There is one Pup binding site per ARC hexamer ring. Upon ATP-binding, the C-terminus of ARC interacts with the alpha-rings of the proteasome core, possibly by binding to the intersubunit pockets.

It participates in protein degradation; proteasomal Pup-dependent pathway. Its function is as follows. ATPase which is responsible for recognizing, binding, unfolding and translocation of pupylated proteins into the bacterial 20S proteasome core particle. May be essential for opening the gate of the 20S proteasome via an interaction with its C-terminus, thereby allowing substrate entry and access to the site of proteolysis. Thus, the C-termini of the proteasomal ATPase may function like a 'key in a lock' to induce gate opening and therefore regulate proteolysis. The chain is Proteasome-associated ATPase from Sanguibacter keddieii (strain ATCC 51767 / DSM 10542 / NCFB 3025 / ST-74).